The chain runs to 384 residues: DNA dC-&gt;dU-editing enzyme APOBEC-3G (384 aa).

The tract at residues 1 to 60 is essential for cytoplasmic localization; sequence MNPQFRNMVDGMDPHKFSYNFKNRPILSRRNTVWLCYEVKTKGPSRPPLDAKIFRGQVYF. CMP/dCMP-type deaminase domains are found at residues 29-138 and 214-328; these read RRNT…LRSL and GRHE…LRTL. Residue T32 is modified to Phosphothreonine; by PKA. Residues H65, C97, and C100 each contribute to the Zn(2+) site. The segment at 209 to 336 is necessary for homooligomerization; that stretch reads EPCVEGRHET…TLDEAEAKIS (128 aa). The segment at 213–215 is interaction with DNA; it reads EGR. T218 is subject to Phosphothreonine; by PKA and CAMK2. A Zn(2+)-binding site is contributed by H257. Residue E259 is the Proton donor of the active site. Zn(2+)-binding residues include C288 and C291. The interval 313–320 is interaction with DNA; that stretch reads RIYDDQGR.

Belongs to the cytidine and deoxycytidylate deaminase family. In terms of assembly, homodimer. Requires Zn(2+) as cofactor.

It is found in the cytoplasm. It localises to the nucleus. The protein localises to the P-body. The enzyme catalyses a 2'-deoxycytidine in single-stranded DNA + H2O + H(+) = a 2'-deoxyuridine in single-stranded DNA + NH4(+). In terms of biological role, DNA deaminase (cytidine deaminase) which acts as an inhibitor of retrovirus replication and retrotransposon mobility. After the penetration of retroviral nucleocapsids into target cells of infection and the initiation of reverse transcription, it can induce the conversion of cytosine to uracil in the minus-sense single-strand viral DNA, leading to G-to-A hypermutations in the subsequent plus-strand viral DNA. The resultant detrimental levels of mutations in the proviral genome, along with a deamination-independent mechanism that works prior to the proviral integration, together exert efficient antiretroviral effects in infected target cells. Selectively targets single-stranded DNA and does not deaminate double-stranded DNA or single- or double-stranded RNA. This Pongo pygmaeus (Bornean orangutan) protein is DNA dC-&gt;dU-editing enzyme APOBEC-3G (APOBEC3G).